The sequence spans 145 residues: Large ribosomal subunit protein uL14m (145 aa).

The N-terminal 30 residues, Met1–Gly30, are a transit peptide targeting the mitochondrion.

The protein belongs to the universal ribosomal protein uL14 family. Component of the mitochondrial ribosome large subunit (39S) which comprises a 16S rRNA and about 50 distinct proteins. Interacts with MALSU1.

The protein resides in the mitochondrion. In terms of biological role, may form part of 2 intersubunit bridges in the assembled ribosome. Upon binding to MALSU1, intersubunit bridge formation is blocked, preventing ribosome formation and repressing translation. This is Large ribosomal subunit protein uL14m (MRPL14) from Bos taurus (Bovine).